Here is a 140-residue protein sequence, read N- to C-terminus: Gas vesicle protein O (140 aa).

Over residues 1–14 (MSDQGNEHANHDGI) the composition is skewed to basic and acidic residues. Residues 1–61 (MSDQGNEHAN…DSTIGLSDAQ (61 aa)) form a disordered region. A compositionally biased stretch (polar residues) spans 39 to 56 (QTASDEAVSNQSPDSTIG).

The protein belongs to the gas vesicle GvpO family. In terms of assembly, forms homodimers, forms a GvpN-GvpO heterodimer, interacts with GvpC, GvpF, GvpI and GvpL, might interact with GvpA.

The protein resides in the gas vesicle. Its subcellular location is the cytoplasm. A minor component of the gas vesicle (GV), may play a role in transcription and/or RNA stability and/or in GV assembly. Gas vesicles are small, hollow, gas filled protein structures found in some microorganisms. They allow positioning of halobacteria at the optimal depth for growth in the poorly aerated shallow brine pools of their habitat. In terms of biological role, expression of a 9.5 kb mc-vac DNA fragment containing 2 divergently transcribed regions (gvpD-gvpE-gvpF-gvpG-gvpH-gvpI-gvpJ-gvpK-gvpL-gvpM and gvpA-gvpC-gvpN-gvpO) allows H.volcanii to produce gas vesicles. This is Gas vesicle protein O from Haloferax mediterranei (strain ATCC 33500 / DSM 1411 / JCM 8866 / NBRC 14739 / NCIMB 2177 / R-4) (Halobacterium mediterranei).